Consider the following 381-residue polypeptide: Subtilisin E (381 aa).

Residues 1–29 (MRSKKLWISLLFALTLIFTMAFSNMSAQA) form the signal peptide. The propeptide occupies 30–106 (AGKSSTEKKY…VEEDHIAHEY (77 aa)). Positions 38–103 (KYIVGFKQTM…VAYVEEDHIA (66 aa)) constitute an Inhibitor I9 domain. Gln108 contributes to the Ca(2+) binding site. A Peptidase S8 domain is found at 111 to 380 (PYGISQIKAP…KGLINVQAAA (270 aa)). The active-site Charge relay system is the Asp138. Asp147 serves as a coordination point for Ca(2+). Residue His170 is the Charge relay system of the active site. Leu181, Asn183, Ile185, Val187, Ala275, Tyr277, Thr280, and Asp303 together coordinate Ca(2+). Ser327 functions as the Charge relay system in the catalytic mechanism.

The protein belongs to the peptidase S8 family. Ca(2+) is required as a cofactor.

The protein localises to the secreted. The enzyme catalyses Hydrolysis of proteins with broad specificity for peptide bonds, and a preference for a large uncharged residue in P1. Hydrolyzes peptide amides.. With respect to regulation, inhibited by PMSF (phenylmethylsulphonyl fluoride) and 3,4-dichloroisocoumarin but not by EDTA (shown for strain RT-5). In terms of biological role, an extracellular alkaline serine protease, it catalyzes the hydrolysis of proteins and peptide amides. This Bacillus subtilis (strain 168) protein is Subtilisin E.